The chain runs to 175 residues: RNA pyrophosphohydrolase (175 aa).

In terms of domain architecture, Nudix hydrolase spans 6 to 149 (GYRPNVGIVI…KRDVYRRVMK (144 aa)). Positions 38-59 (GGINPGETPEQAMYRELFEEVG) match the Nudix box motif.

It belongs to the Nudix hydrolase family. RppH subfamily. Requires a divalent metal cation as cofactor.

Accelerates the degradation of transcripts by removing pyrophosphate from the 5'-end of triphosphorylated RNA, leading to a more labile monophosphorylated state that can stimulate subsequent ribonuclease cleavage. The chain is RNA pyrophosphohydrolase from Yersinia pseudotuberculosis serotype O:1b (strain IP 31758).